The primary structure comprises 617 residues: Dihydroxy-acid dehydratase (617 aa).

Mg(2+) is bound at residue Asp-81. Position 122 (Cys-122) interacts with [2Fe-2S] cluster. Positions 123 and 124 each coordinate Mg(2+). N6-carboxylysine is present on Lys-124. A [2Fe-2S] cluster-binding site is contributed by Cys-195. Mg(2+) is bound at residue Glu-492. The active-site Proton acceptor is Ser-518.

The protein belongs to the IlvD/Edd family. In terms of assembly, homodimer. Requires [2Fe-2S] cluster as cofactor. Mg(2+) is required as a cofactor.

The catalysed reaction is (2R)-2,3-dihydroxy-3-methylbutanoate = 3-methyl-2-oxobutanoate + H2O. It catalyses the reaction (2R,3R)-2,3-dihydroxy-3-methylpentanoate = (S)-3-methyl-2-oxopentanoate + H2O. Its pathway is amino-acid biosynthesis; L-isoleucine biosynthesis; L-isoleucine from 2-oxobutanoate: step 3/4. It participates in amino-acid biosynthesis; L-valine biosynthesis; L-valine from pyruvate: step 3/4. Functionally, functions in the biosynthesis of branched-chain amino acids. Catalyzes the dehydration of (2R,3R)-2,3-dihydroxy-3-methylpentanoate (2,3-dihydroxy-3-methylvalerate) into 2-oxo-3-methylpentanoate (2-oxo-3-methylvalerate) and of (2R)-2,3-dihydroxy-3-methylbutanoate (2,3-dihydroxyisovalerate) into 2-oxo-3-methylbutanoate (2-oxoisovalerate), the penultimate precursor to L-isoleucine and L-valine, respectively. In Azorhizobium caulinodans (strain ATCC 43989 / DSM 5975 / JCM 20966 / LMG 6465 / NBRC 14845 / NCIMB 13405 / ORS 571), this protein is Dihydroxy-acid dehydratase.